A 330-amino-acid polypeptide reads, in one-letter code: DNA-directed RNA polymerase subunit alpha (330 aa).

The alpha N-terminal domain (alpha-NTD) stretch occupies residues 1–236; the sequence is MQGSVTEFLK…EQLDAFVDLR (236 aa). Residues 250 to 330 form an alpha C-terminal domain (alpha-CTD) region; that stretch reads FDPILLRPVD…NWPPASIAED (81 aa).

It belongs to the RNA polymerase alpha chain family. As to quaternary structure, homodimer. The RNAP catalytic core consists of 2 alpha, 1 beta, 1 beta' and 1 omega subunit. When a sigma factor is associated with the core the holoenzyme is formed, which can initiate transcription.

It carries out the reaction RNA(n) + a ribonucleoside 5'-triphosphate = RNA(n+1) + diphosphate. Its function is as follows. DNA-dependent RNA polymerase catalyzes the transcription of DNA into RNA using the four ribonucleoside triphosphates as substrates. This Vibrio parahaemolyticus serotype O3:K6 (strain RIMD 2210633) protein is DNA-directed RNA polymerase subunit alpha.